A 352-amino-acid chain; its full sequence is C-C chemokine receptor type 5 (352 aa).

At 1-30 the chain is on the extracellular side; sequence MDYQVSSPTYDIDYYTSEPCQKVNVKQIAA. At Tyr-3 the chain carries Sulfotyrosine. Residues Ser-6 and Ser-7 are each glycosylated (O-linked (GalNAc...) serine). Sulfotyrosine is present on residues Tyr-10, Tyr-14, and Tyr-15. 2 disulfide bridges follow: Cys-20/Cys-269 and Cys-101/Cys-178. A helical transmembrane segment spans residues 31–58; that stretch reads RLLPPLYSLVFIFGFVGNILVVLILINC. At 59–68 the chain is on the cytoplasmic side; that stretch reads KRLKSMTDIY. Residues 69–89 form a helical membrane-spanning segment; sequence LLNLAISDLFFLLTVPFWAHY. The Extracellular segment spans residues 90-102; the sequence is AAAQWDFGNTMCQ. Residues 103 to 124 form a helical membrane-spanning segment; the sequence is LLTGLYFIGFFSGIFFIILLTI. The Cytoplasmic segment spans residues 125–141; the sequence is DRYLAIVHAVFALKART. Residues 142 to 166 form a helical membrane-spanning segment; it reads VTFGVVTSVITWVVAVFASLPGIIF. Over 167 to 198 the chain is Extracellular; it reads TRSQREGLHYTCSSHFPYSQYQFWKNFQTLKI. Residues 199–218 traverse the membrane as a helical segment; it reads VILGLVLPLLIMVICYSGIL. Topologically, residues 219 to 235 are cytoplasmic; that stretch reads KTLLRCRNEKKRHRAVR. Residues 236–260 form a helical membrane-spanning segment; sequence LIFTIMIVYFLFWAPYNIVLLLNTF. Residues 261–277 are Extracellular-facing; the sequence is QEFFGLNNCSSSNRLDQ. A helical transmembrane segment spans residues 278 to 301; sequence AMQVTETLGMTHCCINPIIYAFVG. The Cytoplasmic portion of the chain corresponds to 302–352; the sequence is EKFRNYLLVFFQKHIAKRFCKCCSIFQQEAPERASSVYTRSTGEHEISVGL. 3 S-palmitoyl cysteine lipidation sites follow: Cys-321, Cys-323, and Cys-324. 4 positions are modified to phosphoserine; by BARK1: Ser-336, Ser-337, Ser-342, and Ser-349.

Belongs to the G-protein coupled receptor 1 family. As to quaternary structure, interacts with PRAF2. Efficient ligand binding to CCL3/MIP-1alpha and CCL4/MIP-1beta requires sulfation, O-glycosylation and sialic acid modifications. Glycosylation on Ser-6 is required for efficient binding of CCL4. Interacts with GRK2. Interacts with ARRB1 and ARRB2. Interacts with CNIH4. Interacts with S100A4; this interaction stimulates T-lymphocyte chemotaxis. Post-translationally, sulfated on at least 2 of the N-terminal tyrosines. Sulfation is required for efficient binding of the chemokines, CCL3 and CCL4. Palmitoylation in the C-terminal is important for cell surface expression. In terms of processing, phosphorylation on serine residues in the C-terminal is stimulated by binding CC chemokines especially by APO-RANTES. Post-translationally, O-glycosylated, but not N-glycosylated. Ser-6 appears to be the major site even if Ser-7 may be also O-glycosylated. Also sialylated glycans present which contribute to chemokine binding. Thr-16 and Ser-17 may also be glycosylated and, if so, with small moieties such as a T-antigen.

It is found in the cell membrane. In terms of biological role, receptor for a number of inflammatory CC-chemokines including CCL3/MIP-1-alpha, CCL4/MIP-1-beta and RANTES and subsequently transduces a signal by increasing the intracellular calcium ion level. May play a role in the control of granulocytic lineage proliferation or differentiation. Participates in T-lymphocyte migration to the infection site by acting as a chemotactic receptor. This Pygathrix nemaeus (Red-shanked douc langur) protein is C-C chemokine receptor type 5 (CCR5).